Consider the following 270-residue polypeptide: Formamidopyrimidine-DNA glycosylase (270 aa).

The Schiff-base intermediate with DNA role is filled by Pro-2. The active-site Proton donor is the Glu-3. The Proton donor; for beta-elimination activity role is filled by Lys-56. DNA contacts are provided by His-89, Arg-107, and Arg-151. The segment at 236-270 (TVYGRAGEPCRVCATPIRLLRQGQRSTYYCPNCQK) adopts an FPG-type zinc-finger fold. Arg-260 acts as the Proton donor; for delta-elimination activity in catalysis.

The protein belongs to the FPG family. In terms of assembly, monomer. The cofactor is Zn(2+).

The enzyme catalyses Hydrolysis of DNA containing ring-opened 7-methylguanine residues, releasing 2,6-diamino-4-hydroxy-5-(N-methyl)formamidopyrimidine.. It catalyses the reaction 2'-deoxyribonucleotide-(2'-deoxyribose 5'-phosphate)-2'-deoxyribonucleotide-DNA = a 3'-end 2'-deoxyribonucleotide-(2,3-dehydro-2,3-deoxyribose 5'-phosphate)-DNA + a 5'-end 5'-phospho-2'-deoxyribonucleoside-DNA + H(+). Its function is as follows. Involved in base excision repair of DNA damaged by oxidation or by mutagenic agents. Acts as a DNA glycosylase that recognizes and removes damaged bases. Has a preference for oxidized purines, such as 7,8-dihydro-8-oxoguanine (8-oxoG). Has AP (apurinic/apyrimidinic) lyase activity and introduces nicks in the DNA strand. Cleaves the DNA backbone by beta-delta elimination to generate a single-strand break at the site of the removed base with both 3'- and 5'-phosphates. The chain is Formamidopyrimidine-DNA glycosylase from Variovorax paradoxus (strain S110).